Consider the following 191-residue polypeptide: Cytochrome c oxidase assembly protein CtaG (191 aa).

Topologically, residues Met1–Thr9 are cytoplasmic. A helical; Signal-anchor for type II membrane protein membrane pass occupies residues Val10–Phe30. Residues Tyr31–Asn191 are Periplasmic-facing.

It belongs to the COX11/CtaG family.

Its subcellular location is the cell inner membrane. Its function is as follows. Exerts its effect at some terminal stage of cytochrome c oxidase synthesis, probably by being involved in the insertion of the copper B into subunit I. This is Cytochrome c oxidase assembly protein CtaG from Ruegeria pomeroyi (strain ATCC 700808 / DSM 15171 / DSS-3) (Silicibacter pomeroyi).